The following is a 101-amino-acid chain: Gamma-secretase subunit PEN-2 (101 aa).

The Cytoplasmic segment spans residues 1-17; sequence MNLERVSNEEKLNLCRK. Positions 18 to 36 form an intramembrane region, helical; sequence YYLGGFAFLPFLWLVNIFW. At 37–57 the chain is on the cytoplasmic side; that stretch reads FFKEAFFAPAYTEQSQIKGYV. A helical transmembrane segment spans residues 58–78; that stretch reads WRSAVGFLFWVIVLTTWITIF. The Lumenal portion of the chain corresponds to 79 to 101; sequence QIYRPRWGALGDYLSFTIPLGTP.

It belongs to the PEN-2 family. The functional gamma-secretase complex is composed of at least four polypeptides: a presenilin homodimer (PSEN1 or PSEN2), nicastrin (NCSTN), APH1 (APH1A or APH1B) and PSENEN.

Its subcellular location is the endoplasmic reticulum membrane. It localises to the golgi apparatus. It is found in the golgi stack membrane. The protein resides in the cell membrane. The protein localises to the membrane. Essential subunit of the gamma-secretase complex, an endoprotease complex that catalyzes the intramembrane cleavage of integral membrane proteins such as Notch receptors and APP (amyloid-beta precursor protein). The gamma-secretase complex plays a role in Notch and Wnt signaling cascades and regulation of downstream processes via its role in processing key regulatory proteins, and by regulating cytosolic CTNNB1 levels. PSENEN modulates both endoproteolysis of presenilin and gamma-secretase activity. This Rattus norvegicus (Rat) protein is Gamma-secretase subunit PEN-2 (Psenen).